A 311-amino-acid polypeptide reads, in one-letter code: Malate dehydrogenase (311 aa).

Residues G7–G13 and D34 contribute to the NAD(+) site. Substrate is bound by residues R81 and R87. NAD(+) contacts are provided by residues N94 and I117–N119. Residues N119 and R153 each contribute to the substrate site. H177 acts as the Proton acceptor in catalysis. M227 contacts NAD(+).

It belongs to the LDH/MDH superfamily. MDH type 1 family. In terms of assembly, homodimer.

The enzyme catalyses (S)-malate + NAD(+) = oxaloacetate + NADH + H(+). In terms of biological role, catalyzes the reversible oxidation of malate to oxaloacetate. The chain is Malate dehydrogenase from Haemophilus influenzae (strain PittGG).